The primary structure comprises 509 residues: MEEIQRYLQPDRSQQHNFLYPLIFQEYIYALAHDHGLNRNRSVLLENPGYNNKFSLLIVKRLITRMYQQNHFLISTNDSNKNAFLGCNKSLYSQMISEGFAFIVEIPFSLRLISSLSSFEGKKIFKSHNLRSIHSTFPFLEDNFSHLNYVLDILIPYPVHLEILVQTLRYWVKDASSLHLLRFFLHEYWNLNSLITSKKPGYSFSKKNQRFFFFLYNSYVYECESTFVFLRNQSSRLRSTSFGALLERINFYGKMERLVEVFTKDFQVTLWLFKDPFMHYVRYQEKSILASKGTFLLMNKWKFYLVNFWQCHFSLCFHTGRIHINQLSNHSRDFMGYLSSVRLNPSMLRSQMLENSFLINNAIKKFDTLVPIIPLIGSLAKANFCTVLGHPISKPVWSDLSDSDIIDRFGRICRNLFHYYSGSSKKXTLYRIKYILRLSCARTLARKHKSTVRTFLKRSGSELLEEFLTSEEQVLSLTFPRASSSLWGVYRSRIWYLDIFCINXLANYQ.

Belongs to the intron maturase 2 family. MatK subfamily.

It is found in the plastid. The protein resides in the chloroplast. Its function is as follows. Usually encoded in the trnK tRNA gene intron. Probably assists in splicing its own and other chloroplast group II introns. In Nicotiana rustica (Aztec tobacco), this protein is Maturase K.